The primary structure comprises 462 residues: Chitinase 1 (462 aa).

The N-terminal stretch at 1–17 (MILNLIILLAISIVASA) is a signal peptide. Positions 18-291 (SNIAAYWGQN…NQLHQALSGS (274 aa)) constitute a GH18 domain. Residue asparagine 57 is glycosylated (N-linked (GlcNAc...) asparagine). Residue glutamate 147 is the Proton donor of the active site.

The protein belongs to the glycosyl hydrolase 18 family. Chitinase class V subfamily.

It localises to the secreted. The catalysed reaction is Random endo-hydrolysis of N-acetyl-beta-D-glucosaminide (1-&gt;4)-beta-linkages in chitin and chitodextrins.. Its function is as follows. Chitinase involved in the remodeling of chitin in the fungal cell wall. Plays a role in cell separation. The chain is Chitinase 1 (CHT1) from Candida albicans (strain SC5314 / ATCC MYA-2876) (Yeast).